A 267-amino-acid polypeptide reads, in one-letter code: Glutamate 5-kinase (267 aa).

Lys-14 lines the ATP pocket. Substrate contacts are provided by Ser-54, Asp-141, and Asn-157. Residues 177-178 (SD) and 219-225 (TGGMLSK) contribute to the ATP site.

The protein belongs to the glutamate 5-kinase family.

The protein resides in the cytoplasm. It carries out the reaction L-glutamate + ATP = L-glutamyl 5-phosphate + ADP. It functions in the pathway amino-acid biosynthesis; L-proline biosynthesis; L-glutamate 5-semialdehyde from L-glutamate: step 1/2. Catalyzes the transfer of a phosphate group to glutamate to form L-glutamate 5-phosphate. The protein is Glutamate 5-kinase of Streptococcus agalactiae serotype Ia (strain ATCC 27591 / A909 / CDC SS700).